A 173-amino-acid polypeptide reads, in one-letter code: PTS system glucose-specific EIIA component (173 aa).

The PTS EIIA type-1 domain occupies 40–144 (DPTFAQKMMG…STVTPVVVTN (105 aa)). The Zn(2+) site is built by His-77 and His-92. His-92 acts as the Tele-phosphohistidine intermediate; for EIIA activity in catalysis. His-92 carries the post-translational modification Phosphohistidine; by HPr.

Heterodimer with glycerol kinase (glpk). Requires Zn(2+) as cofactor.

Its subcellular location is the cytoplasm. Functionally, the phosphoenolpyruvate-dependent sugar phosphotransferase system (sugar PTS), a major carbohydrate active transport system, catalyzes the phosphorylation of incoming sugar substrates concomitantly with their translocation across the cell membrane. The enzyme II complex composed of PtsG and Crr is involved in glucose transport. The protein is PTS system glucose-specific EIIA component (crr) of Halalkalibacterium halodurans (strain ATCC BAA-125 / DSM 18197 / FERM 7344 / JCM 9153 / C-125) (Bacillus halodurans).